The following is a 75-amino-acid chain: MARFFRRRKFCRFKADGVKEIDYKDIATLKNYITETGKIVPSRITGTSAKYQRQLARAIKRARYLSLLPYTDSHQ.

This sequence belongs to the bacterial ribosomal protein bS18 family. As to quaternary structure, part of the 30S ribosomal subunit. Forms a tight heterodimer with protein bS6.

Its function is as follows. Binds as a heterodimer with protein bS6 to the central domain of the 16S rRNA, where it helps stabilize the platform of the 30S subunit. The protein is Small ribosomal subunit protein bS18 of Idiomarina loihiensis (strain ATCC BAA-735 / DSM 15497 / L2-TR).